Here is a 331-residue protein sequence, read N- to C-terminus: MELEFLYDLLQLPKEVAQPTEEELPRGGKKKYLSPNSKRNPKFEELQKVLMEWINTTLLPEHIVVRSLEEDMFDGLILHHLFQKLASLKLEVEEISLTSASQRHKLGVILEAVNQNLQVEEKQAKWSVETIFNKDLLATLHLLVALAKRFQPDLPLPDNVQVEVIHIESTKTGLKSDKQVEQLTECKSHKDQPLQDAFDELFKLAPEKVHAVQEAIVSFVNQKLERLGLSVQSLDTQFADGVILLLLIGQLEGFFLHLKEFYLTPSSPTEMLHNVTLALDLLKDEGLFSYPVNPEDIVNKDAKSTLRILYSLFQKHSLRAEGGGAHHATPN.

M1 carries the post-translational modification N-acetylmethionine. The segment at 18–38 (QPTEEELPRGGKKKYLSPNSK) is disordered. 2 Calponin-homology (CH) domains span residues 44 to 151 (EELQ…KRFQ) and 210 to 317 (HAVQ…QKHS).

The protein belongs to the parvin family. Interacts with ILK; the interaction promotes the establishment of cell polarity required for leukocyte migration. Interacts with ARHGEF6; the guanine nucleotide exchange factor activity of ARHGEF6 is essential for the PARVG-induced enhancement of cell spreading. Expressed strongly in spleen and testis, moderately in lung and weakly in brain and heart.

Its subcellular location is the cell junction. The protein resides in the focal adhesion. It is found in the cell membrane. The protein localises to the cytoplasm. It localises to the cytoskeleton. In terms of biological role, plays a role with ILK in promoting the cell adhesion and spreading of leukocytes. The sequence is that of Gamma-parvin (Parvg) from Mus musculus (Mouse).